Consider the following 492-residue polypeptide: Catalase isozyme 2 (492 aa).

Active-site residues include histidine 65 and asparagine 138. Residue tyrosine 348 coordinates heme.

The protein belongs to the catalase family. As to quaternary structure, homotetramer. The cofactor is heme.

The protein localises to the peroxisome. The protein resides in the glyoxysome. It carries out the reaction 2 H2O2 = O2 + 2 H2O. Occurs in almost all aerobically respiring organisms and serves to protect cells from the toxic effects of hydrogen peroxide. The protein is Catalase isozyme 2 (CAT2) of Solanum tuberosum (Potato).